The primary structure comprises 217 residues: Small ribosomal subunit protein uS3c (217 aa).

The KH type-2 domain maps to 39-109 (IRNFLRTKLI…RFRITITYIP (71 aa)).

This sequence belongs to the universal ribosomal protein uS3 family. In terms of assembly, part of the 30S ribosomal subunit.

The protein resides in the plastid. It localises to the chloroplast. The polypeptide is Small ribosomal subunit protein uS3c (rps3) (Chlorokybus atmophyticus (Soil alga)).